The primary structure comprises 269 residues: 4-hydroxy-tetrahydrodipicolinate reductase (269 aa).

NAD(+) is bound by residues 11–16 (GASGRM) and Glu-37. Arg-38 contributes to the NADP(+) binding site. NAD(+) is bound by residues 101 to 103 (GTT) and 125 to 128 (AGNM). The Proton donor/acceptor role is filled by His-158. His-159 is a (S)-2,3,4,5-tetrahydrodipicolinate binding site. Lys-162 (proton donor) is an active-site residue. 168–169 (GT) serves as a coordination point for (S)-2,3,4,5-tetrahydrodipicolinate.

It belongs to the DapB family.

The protein localises to the cytoplasm. The enzyme catalyses (S)-2,3,4,5-tetrahydrodipicolinate + NAD(+) + H2O = (2S,4S)-4-hydroxy-2,3,4,5-tetrahydrodipicolinate + NADH + H(+). It carries out the reaction (S)-2,3,4,5-tetrahydrodipicolinate + NADP(+) + H2O = (2S,4S)-4-hydroxy-2,3,4,5-tetrahydrodipicolinate + NADPH + H(+). Its pathway is amino-acid biosynthesis; L-lysine biosynthesis via DAP pathway; (S)-tetrahydrodipicolinate from L-aspartate: step 4/4. In terms of biological role, catalyzes the conversion of 4-hydroxy-tetrahydrodipicolinate (HTPA) to tetrahydrodipicolinate. The chain is 4-hydroxy-tetrahydrodipicolinate reductase from Ruegeria pomeroyi (strain ATCC 700808 / DSM 15171 / DSS-3) (Silicibacter pomeroyi).